The chain runs to 372 residues: Mevalonate 3,5-bisphosphate decarboxylase (372 aa).

This sequence belongs to the mevalonate 3,5-bisphosphate decarboxylase family. In terms of assembly, homodimer.

The catalysed reaction is (R)-3,5-bisphosphomevalonate + H(+) = isopentenyl phosphate + phosphate + CO2. It participates in isoprenoid biosynthesis; isopentenyl diphosphate biosynthesis via mevalonate pathway. Catalyzes the ATP-independent decarboxylation of (R)-mevalonate 3,5-bisphosphate to isopentenyl phosphate. Functions in an alternative mevalonate pathway, only present in extreme acidophiles of the Thermoplasmatales order, which passes through mevalonate 3-phosphate rather than mevalonate 5-phosphate. In Thermoplasma volcanium (strain ATCC 51530 / DSM 4299 / JCM 9571 / NBRC 15438 / GSS1), this protein is Mevalonate 3,5-bisphosphate decarboxylase.